A 135-amino-acid polypeptide reads, in one-letter code: Small ribosomal subunit protein uS9 (135 aa).

Residues 108–118 (VGDPRRTEPHK) show a composition bias toward basic and acidic residues. The interval 108–135 (VGDPRRTEPHKPNRSTKGPRAKRQKSYR) is disordered. The segment covering 119 to 135 (PNRSTKGPRAKRQKSYR) has biased composition (basic residues).

The protein belongs to the universal ribosomal protein uS9 family.

In Pyrococcus horikoshii (strain ATCC 700860 / DSM 12428 / JCM 9974 / NBRC 100139 / OT-3), this protein is Small ribosomal subunit protein uS9 (rps9).